An 89-amino-acid chain; its full sequence is Mu-like prophage FluMu DNA-binding protein Ner (89 aa).

A DNA-binding region (H-T-H motif) is located at residues 57–76 (ERLVANAIGVPPEVIWAGRF).

Belongs to the ner transcriptional regulatory family.

Functionally, negative regulator of transcription starting from the Pe and Pc promoters of Mu. Also negatively regulates its own gene transcription. This is Mu-like prophage FluMu DNA-binding protein Ner (nlp) from Haemophilus influenzae (strain ATCC 51907 / DSM 11121 / KW20 / Rd).